The following is a 459-amino-acid chain: MANITNEFMGHDMLAPFTAGWQSDMEPLVIEKSEGSYVYDINGKKYLDTLSGLWCATLGGSETRLVEAANKQLNTLPFYHSFWNRTTKPSLDLAKELLNMFTANKMAKVFFTNSGSEANDTQVKLVWYYNNALGRPQKKKIIARAKAYHGSTYISAGLSGLPPMHQKFDLPPPFVLHTECPHYWAYHLPGETEEEFSTRLANNLESLILKEGPETVAAFIAEPVLGAAGVILPPATYFDKVQTILRKYDILFIADEVVCGFGRLGTMFGGDKYNIKPDLVSVAKALSSGYMPIAAVLVSQKISSVILSESNKIGAFCHGFTYSGHPVACAVALEALKIYKERNITEVVNKISQKFQEGLKAFADSPIIGEIRGTGLALSTEFVDNKSPNDPFPYEWAVGTYFGAQCAKYGMLVSSTGDHVNMAPPFMLSLEELDELIRIYGKALKDTEKRVEELKSQKK.

Pyridoxal 5'-phosphate contacts are provided by residues Gly-115–Ser-116 and Asp-255. Lys-284 carries the post-translational modification N6-(pyridoxal phosphate)lysine. Phe-320–Thr-321 contributes to the pyridoxal 5'-phosphate binding site. The stretch at Leu-428–Lys-459 forms a coiled coil.

This sequence belongs to the class-III pyridoxal-phosphate-dependent aminotransferase family. As to expression, expressed in placental tissue of immature fruit.

The catalysed reaction is vanillin + L-alanine = vanillylamine + pyruvate. It participates in aromatic compound metabolism; phenylpropanoid biosynthesis. Functionally, involved in the biosynthesis of capsaicinoids natural products, pungent alkaloids synthesized from phenylpropanoid intermediates in the placental tissue of chili pepper fruit acting as repellant on herbivorous mammals and conferring spiciness to hot peppers. Can transfer an amine from vanillylamine to pyruvate forming vanillin and L-alanine. Can use pyruvate or oxaloacetate, but not 2-oxoglutarate as amino group acceptors. Is able to convert (S)-1-phenylethylamine into acetophenone in vitro. The chain is Vanillin aminotransferase from Capsicum chinense (Scotch bonnet).